The sequence spans 551 residues: Ubiquitin carboxyl-terminal hydrolase 24 (551 aa).

Disordered regions lie at residues Asn51–Val104 and Asn163–Val188. The USP domain maps to Arg197–Val551. The Nucleophile role is filled by Cys206. A compositionally biased stretch (polar residues) spans Ser329–Asn338. The tract at residues Ser329–Pro349 is disordered. The active-site Proton acceptor is the His510.

Belongs to the peptidase C19 family.

The catalysed reaction is Thiol-dependent hydrolysis of ester, thioester, amide, peptide and isopeptide bonds formed by the C-terminal Gly of ubiquitin (a 76-residue protein attached to proteins as an intracellular targeting signal).. Functionally, recognizes and hydrolyzes the peptide bond at the C-terminal Gly of ubiquitin. Involved in the processing of poly-ubiquitin precursors as well as that of ubiquitinated proteins. This chain is Ubiquitin carboxyl-terminal hydrolase 24 (UBP24), found in Arabidopsis thaliana (Mouse-ear cress).